A 104-amino-acid polypeptide reads, in one-letter code: uncharacterized protein (104 aa).

The disordered stretch occupies residues 1–24 (MISTEKSSDAVAMHCPSGDQHNSE).

This is an uncharacterized protein from Saccharomyces cerevisiae (strain ATCC 204508 / S288c) (Baker's yeast).